Reading from the N-terminus, the 204-residue chain is Carbon disulfide hydrolase (204 aa).

Residues C35, H88, and C91 each contribute to the Zn(2+) site.

This sequence belongs to the beta-class carbonic anhydrase family. As to quaternary structure, forms a hexadecameric catenane homooligomer, through interactions of two interlocked octameric rings. It depends on Zn(2+) as a cofactor.

The catalysed reaction is carbon disulfide + 2 H2O = 2 hydrogen sulfide + CO2 + 2 H(+). The protein operates within sulfur metabolism; hydrogen sulfide biosynthesis. Catalyzes the conversion of carbon disulfide into hydrogen sulfide and carbon dioxide, with carbonyl sulfide as an intermediate. Likely plays a key role in sulfur metabolism in S.solfataricus. Does not show carbonic anhydrase activity (hydration of CO(2) to carbonate). In Saccharolobus solfataricus (strain ATCC 35092 / DSM 1617 / JCM 11322 / P2) (Sulfolobus solfataricus), this protein is Carbon disulfide hydrolase.